A 564-amino-acid chain; its full sequence is NAD-dependent malic enzyme (564 aa).

Residue Tyr104 is the Proton donor of the active site. Arg157 is an NAD(+) binding site. Catalysis depends on Lys175, which acts as the Proton acceptor. Residues Glu246, Asp247, and Asp270 each coordinate a divalent metal cation. Residues Asp270 and Asn417 each contribute to the NAD(+) site.

The protein belongs to the malic enzymes family. In terms of assembly, homotetramer. Requires Mg(2+) as cofactor. Mn(2+) is required as a cofactor.

It catalyses the reaction (S)-malate + NAD(+) = pyruvate + CO2 + NADH. The catalysed reaction is oxaloacetate + H(+) = pyruvate + CO2. The chain is NAD-dependent malic enzyme from Aeromonas hydrophila subsp. hydrophila (strain ATCC 7966 / DSM 30187 / BCRC 13018 / CCUG 14551 / JCM 1027 / KCTC 2358 / NCIMB 9240 / NCTC 8049).